The chain runs to 89 residues: Small ribosomal subunit protein uS15 (89 aa).

Belongs to the universal ribosomal protein uS15 family. As to quaternary structure, part of the 30S ribosomal subunit. Forms a bridge to the 50S subunit in the 70S ribosome, contacting the 23S rRNA.

Functionally, one of the primary rRNA binding proteins, it binds directly to 16S rRNA where it helps nucleate assembly of the platform of the 30S subunit by binding and bridging several RNA helices of the 16S rRNA. Forms an intersubunit bridge (bridge B4) with the 23S rRNA of the 50S subunit in the ribosome. In Dechloromonas aromatica (strain RCB), this protein is Small ribosomal subunit protein uS15.